Here is a 417-residue protein sequence, read N- to C-terminus: Gamma-glutamyl phosphate reductase (417 aa).

The protein belongs to the gamma-glutamyl phosphate reductase family.

The protein localises to the cytoplasm. It catalyses the reaction L-glutamate 5-semialdehyde + phosphate + NADP(+) = L-glutamyl 5-phosphate + NADPH + H(+). It participates in amino-acid biosynthesis; L-proline biosynthesis; L-glutamate 5-semialdehyde from L-glutamate: step 2/2. Functionally, catalyzes the NADPH-dependent reduction of L-glutamate 5-phosphate into L-glutamate 5-semialdehyde and phosphate. The product spontaneously undergoes cyclization to form 1-pyrroline-5-carboxylate. The chain is Gamma-glutamyl phosphate reductase from Escherichia coli (strain SMS-3-5 / SECEC).